A 347-amino-acid chain; its full sequence is NADH-ubiquinone oxidoreductase chain 2 (347 aa).

The next 10 helical transmembrane spans lie at 3–23, 25–45, 59–79, 93–115, 150–170, 178–198, 200–220, 240–260, 274–294, and 326–346; these read PLAL…TMMS, HWLT…PILM, YFMT…INLM, VASN…HFWV, NTNL…WGGL, ILAY…PFNP, LTLL…MILA, MTIM…LSGF, NSII…YFYM, and LPTL…ISML.

It belongs to the complex I subunit 2 family. As to quaternary structure, core subunit of respiratory chain NADH dehydrogenase (Complex I) which is composed of 45 different subunits. Interacts with TMEM242.

Its subcellular location is the mitochondrion inner membrane. It carries out the reaction a ubiquinone + NADH + 5 H(+)(in) = a ubiquinol + NAD(+) + 4 H(+)(out). In terms of biological role, core subunit of the mitochondrial membrane respiratory chain NADH dehydrogenase (Complex I) which catalyzes electron transfer from NADH through the respiratory chain, using ubiquinone as an electron acceptor. Essential for the catalytic activity and assembly of complex I. The sequence is that of NADH-ubiquinone oxidoreductase chain 2 from Mammuthus primigenius (Siberian woolly mammoth).